A 295-amino-acid chain; its full sequence is Ornithine carbamoyltransferase, catabolic (295 aa).

Residues S49–T52, Q76, R100, and H127–Q130 each bind carbamoyl phosphate. L-ornithine contacts are provided by residues N155, D213, and S217–M218. Carbamoyl phosphate is bound by residues C253–L254 and R281.

This sequence belongs to the aspartate/ornithine carbamoyltransferase superfamily. OTCase family. As to quaternary structure, homohexamer.

The protein localises to the cytoplasm. The catalysed reaction is carbamoyl phosphate + L-ornithine = L-citrulline + phosphate + H(+). Its pathway is amino-acid degradation; L-arginine degradation via ADI pathway; carbamoyl phosphate from L-arginine: step 2/2. Arginine lead to a slight activation. Inhibited by all nucleotide phosphates. Reversibly catalyzes the transfer of the carbamoyl group from carbamoyl phosphate (CP) to the N(epsilon) atom of ornithine (ORN) to produce L-citrulline. The sequence is that of Ornithine carbamoyltransferase, catabolic (arcB) from Halobacterium salinarum (strain ATCC 700922 / JCM 11081 / NRC-1) (Halobacterium halobium).